The chain runs to 140 residues: Small ribosomal subunit protein bS6 (140 aa).

Positions Glu111–Ala140 are disordered. Acidic residues predominate over residues Gly121–Ala140.

This sequence belongs to the bacterial ribosomal protein bS6 family.

Its function is as follows. Binds together with bS18 to 16S ribosomal RNA. This is Small ribosomal subunit protein bS6 from Rhodopirellula baltica (strain DSM 10527 / NCIMB 13988 / SH1).